Here is a 132-residue protein sequence, read N- to C-terminus: MSMTDPIADLLVRIKNAAAVGKQTVKAPSSKIKVAIAQVLKDEGYITDLRVTQLENNKSELEIVLKYFEGKPVIATLKRFSRSGLRQYRGKSELPKVMNGLGISIISTSKGIMTDAQARQLGVGGEVLCFVA.

The protein belongs to the universal ribosomal protein uS8 family. In terms of assembly, part of the 30S ribosomal subunit. Contacts proteins S5 and S12.

One of the primary rRNA binding proteins, it binds directly to 16S rRNA central domain where it helps coordinate assembly of the platform of the 30S subunit. The chain is Small ribosomal subunit protein uS8 from Stenotrophomonas maltophilia (strain K279a).